We begin with the raw amino-acid sequence, 242 residues long: UPF0309 protein BSUIS_B0903 (242 aa).

An SIS domain is found at 30–214; sequence AADLIAAAAR…ARLVGEGDAP (185 aa).

The protein belongs to the UPF0309 family.

The polypeptide is UPF0309 protein BSUIS_B0903 (Brucella suis (strain ATCC 23445 / NCTC 10510)).